A 955-amino-acid polypeptide reads, in one-letter code: 2-oxoglutarate dehydrogenase E1 component (955 aa).

This sequence belongs to the alpha-ketoglutarate dehydrogenase family. As to quaternary structure, homodimer. Part of the 2-oxoglutarate dehydrogenase (OGDH) complex composed of E1 (2-oxoglutarate dehydrogenase), E2 (dihydrolipoamide succinyltransferase) and E3 (dihydrolipoamide dehydrogenase); the complex contains multiple copies of the three enzymatic components (E1, E2 and E3). It depends on thiamine diphosphate as a cofactor.

It carries out the reaction N(6)-[(R)-lipoyl]-L-lysyl-[protein] + 2-oxoglutarate + H(+) = N(6)-[(R)-S(8)-succinyldihydrolipoyl]-L-lysyl-[protein] + CO2. In terms of biological role, E1 component of the 2-oxoglutarate dehydrogenase (OGDH) complex which catalyzes the decarboxylation of 2-oxoglutarate, the first step in the conversion of 2-oxoglutarate to succinyl-CoA and CO(2). The sequence is that of 2-oxoglutarate dehydrogenase E1 component from Bacillus cereus (strain ATCC 14579 / DSM 31 / CCUG 7414 / JCM 2152 / NBRC 15305 / NCIMB 9373 / NCTC 2599 / NRRL B-3711).